Here is a 162-residue protein sequence, read N- to C-terminus: Cyanate hydratase (162 aa).

Active-site residues include R103, E106, and S129.

It belongs to the cyanase family.

It catalyses the reaction cyanate + hydrogencarbonate + 3 H(+) = NH4(+) + 2 CO2. Functionally, catalyzes the reaction of cyanate with bicarbonate to produce ammonia and carbon dioxide. This chain is Cyanate hydratase, found in Pyrenophora tritici-repentis (strain Pt-1C-BFP) (Wheat tan spot fungus).